Consider the following 325-residue polypeptide: MIDYTSFLEQEKEGPLARWVEILPDQISEGLSTKRYGDLEQWLTAMQNLPQVDNVQVSYQSAVTLKSTAPLAQETHTLIEQQFRALIPWRKGPYNIFDIEIDTEWHSDWKWDRVLPHLAPLKHRKILDVGCGNGYHCWRMYGEGASQVIGIDPSPRFVVQFYMLKHFIGSNAPVDLLPVPMEAVPANLQAFDTTFSMGVLYHRRSPMDHLRELKATLRPGGQLVLETLVIEGKLGEVLVPEGRYAMMNNVWFLPSVPTLISWLTKCGFKNARCVDVNQTSTDEQRSTEWMTFQSLSDFLDPNDPTLTAEGHPAPLRAVILAEAPE.

Residues lysine 91, tryptophan 105, lysine 110, glycine 130, 152–154 (DPS), 181–182 (ME), methionine 197, tyrosine 201, and arginine 316 contribute to the carboxy-S-adenosyl-L-methionine site.

This sequence belongs to the class I-like SAM-binding methyltransferase superfamily. CmoB family. Homotetramer.

The catalysed reaction is carboxy-S-adenosyl-L-methionine + 5-hydroxyuridine(34) in tRNA = 5-carboxymethoxyuridine(34) in tRNA + S-adenosyl-L-homocysteine + H(+). In terms of biological role, catalyzes carboxymethyl transfer from carboxy-S-adenosyl-L-methionine (Cx-SAM) to 5-hydroxyuridine (ho5U) to form 5-carboxymethoxyuridine (cmo5U) at position 34 in tRNAs. In Saccharophagus degradans (strain 2-40 / ATCC 43961 / DSM 17024), this protein is tRNA U34 carboxymethyltransferase.